We begin with the raw amino-acid sequence, 82 residues long: RNA-binding protein Hfq (82 aa).

A Sm domain is found at aspartate 11–isoleucine 71.

It belongs to the Hfq family. In terms of assembly, homohexamer.

In terms of biological role, RNA chaperone that binds small regulatory RNA (sRNAs) and mRNAs to facilitate mRNA translational regulation in response to envelope stress, environmental stress and changes in metabolite concentrations. Also binds with high specificity to tRNAs. This is RNA-binding protein Hfq from Bradyrhizobium diazoefficiens (strain JCM 10833 / BCRC 13528 / IAM 13628 / NBRC 14792 / USDA 110).